Reading from the N-terminus, the 587-residue chain is Kelch-like ECH-associated protein 1B (587 aa).

In terms of domain architecture, BTB spans 44 to 117; the sequence is CDVTLRVRYC…AYTASISVGE (74 aa). The BACK domain occupies 153-253; that stretch reads IGIASFAEQI…LTPHFLQRQL (101 aa). 6 Kelch repeats span residues 292–337, 338–388, 389–435, 436–482, 484–529, and 530–576; these read LIYT…VISG, LLYA…VIDG, MIYA…VINR, LLYA…ALGN, IYVM…THHG, and RIYV…VTME.

The protein belongs to the KEAP1 family. In terms of assembly, homodimer and heterodimer; heterodimerizes with keap1a. Component of the BCR(KEAP1) E3 ubiquitin ligase complex, at least composed of 2 molecules of cul3, 2 molecules of keap1 (keap1a and/or keap1b), and rbx1. Interacts with nfe2l2/nrf2; the interaction is direct. Non-enzymatic covalent modifications of reactive cysteines by electrophile metabolites inactivate the BCR(KEAP1) complex. As to expression, widely expressed.

It localises to the cytoplasm. The protein localises to the nucleus. Its pathway is protein modification; protein ubiquitination. With respect to regulation, ubiquitin ligase activity of the BCR(KEAP1) complex is inhibited by oxidative stress and electrophile metabolites such as sulforaphane. Electrophile metabolites react with reactive cysteine residues in keap1 and trigger non-enzymatic covalent modifications of these cysteine residues, leading to inactivate the ubiquitin ligase activity of the BCR(KEAP1) complex. Substrate-specific adapter of a BCR (BTB-CUL3-RBX1) E3 ubiquitin ligase complex that regulates the response to oxidative stress by targeting nfe2l2/nrf2 for ubiquitination. Keap1 acts as a key sensor of oxidative and electrophilic stress: in normal conditions, the BCR(KEAP1) complex mediates ubiquitination and degradation of nfe2l2/nrf2, a transcription factor regulating expression of many cytoprotective genes. In response to oxidative stress, different electrophile metabolites trigger non-enzymatic covalent modifications of highly reactive cysteine residues in KEAP1, leading to inactivate the ubiquitin ligase activity of the BCR(KEAP1) complex, promoting nfe2l2/nrf2 nuclear accumulation and expression of phase II detoxifying enzymes. The protein is Kelch-like ECH-associated protein 1B of Danio rerio (Zebrafish).